The sequence spans 231 residues: uncharacterized protein (231 aa).

An RCK N-terminal domain is found at Arg3–Ile119. The RCK C-terminal domain maps to His134–Pro221.

This is an uncharacterized protein from Mycoplasma pneumoniae (strain ATCC 29342 / M129 / Subtype 1) (Mycoplasmoides pneumoniae).